A 150-amino-acid polypeptide reads, in one-letter code: Monooxygenase nsrS (150 aa).

Belongs to the avfA family.

It functions in the pathway secondary metabolite biosynthesis. Functionally, monooxygenase; part of the gene cluster that mediates the biosynthesis of the tetrahydroxanthone dimer neosartorin, which exhibits antibacterial activity. The two different monomeric units appear to be synthesized by the same set of enzymes, among which the Baeyer-Villiger monooxygenase nsrF is the key enzyme for the divergence of the biosynthetic routes. The pathway begins with the synthesis of atrochrysone thioester by the polyketide synthase nsrB. The atrochrysone carboxyl ACP thioesterase nsrC then breaks the thioester bond and releases the atrochrysone carboxylic acid from AacuL. Atrochrysone carboxylic acid is decarboxylated by the decarboxylase nsrE, and oxidized by the anthrone oxygenase nsrD to yield emodin. Emodin is then reduced to emodin hydroquinone by the oxidoreductase nsrR. A-ring reduction by the short chain dehydrogenase nsrJ, dehydration by the scytalone dehydratase-like protein nsrI and probable spontaneous re-oxidation, results in overall deoxygenation to chrysophanol. The Baeyer-Villiger monooxygenase nsrF accepts chrysophanol as a substrate to insert one oxygen atom at two different positions to yield the precursors of both monomric units. NsrF is promiscuous/flexible in interacting with the 2 (non methylated and methylated) aromatic rings of chrysophanol, thus diverging the biosynthetic pathway at this point. After the hydrolysis of the lactones, methylesterification by the methyltransferase nsrG yields respectively moniliphenone and 2,2',6'-trihydroxy-4-methyl-6-methoxya-cyldiphenylmethanone. The next steps are the hydroxylation by the FAD-dependent monooxygenase nsrK, followed by isomerization by the monooxygenase nsrQ. The short chain dehydrogenase/reductase nsrO then catalyzes the C-5 ketoreduction to give the xanthone skeleton of blennolide C and 5-acetylblennolide A. The acetyltransferase nsrL has a strict substrate specificity and uses only blennolide A but not blennolide C to yield 5-acetylblennolide A as the single-acetylated product. In the final step of the biosynthesis, the heterodimerization of the 2 xanthones, blennolide C and 5-acetylblennolide A, is catalyzed by the cytochrome P450 monooxygenase nsrP. NsrP can utilize at least three different xanthones as its substrates to perform the dimerization reaction. This Aspergillus novofumigatus (strain IBT 16806) protein is Monooxygenase nsrS.